Reading from the N-terminus, the 239-residue chain is Superoxide dismutase 1 copper chaperone (239 aa).

Positions 7-70 constitute an HMA domain; sequence FYEATYAVPM…ALRDCGRDAI (64 aa). Cu cation contacts are provided by Cys18 and Cys21. Cys28 and Cys65 are oxidised to a cystine. Residue Asp163 coordinates Zn(2+). Residues Cys219 and Cys221 each coordinate Cu cation.

The protein belongs to the CCS1 family. The cofactor is Cu(2+).

It is found in the cytoplasm. Its function is as follows. Copper chaperone for superoxide dismutase 1 (SOD1). Binds copper ions and delivers them specifically to SOD1. The polypeptide is Superoxide dismutase 1 copper chaperone (CCS1) (Candida glabrata (strain ATCC 2001 / BCRC 20586 / JCM 3761 / NBRC 0622 / NRRL Y-65 / CBS 138) (Yeast)).